Reading from the N-terminus, the 1399-residue chain is DNA-directed RNA polymerase subunit beta' (1399 aa).

The Zn(2+) site is built by Cys70, Cys72, Cys85, and Cys88. Mg(2+)-binding residues include Asp460, Asp462, and Asp464. Residues Cys814, Cys888, Cys895, and Cys898 each coordinate Zn(2+).

This sequence belongs to the RNA polymerase beta' chain family. As to quaternary structure, the RNAP catalytic core consists of 2 alpha, 1 beta, 1 beta' and 1 omega subunit. When a sigma factor is associated with the core the holoenzyme is formed, which can initiate transcription. Requires Mg(2+) as cofactor. The cofactor is Zn(2+).

It carries out the reaction RNA(n) + a ribonucleoside 5'-triphosphate = RNA(n+1) + diphosphate. Functionally, DNA-dependent RNA polymerase catalyzes the transcription of DNA into RNA using the four ribonucleoside triphosphates as substrates. In Pseudomonas putida (strain W619), this protein is DNA-directed RNA polymerase subunit beta'.